The following is a 266-amino-acid chain: Short-chain dehydrogenase/reductase AacuF (266 aa).

NADP(+) is bound by residues Leu-13, Asp-57, and Asn-85. Active-site proton donor residues include Ser-145 and Tyr-164. NADP(+)-binding residues include Tyr-164, Lys-168, and Val-198. The active-site Lowers pKa of active site Tyr is the Lys-168.

It belongs to the short-chain dehydrogenases/reductases (SDR) family.

It functions in the pathway secondary metabolite biosynthesis. Short-chain dehydrogenase/reductase; part of the gene cluster that mediates the biosynthesis of the tetrahydroxanthone dimer secalonic acid D. The pathway begins with the synthesis of atrochrysone thioester by the polyketide synthase AacuL. The atrochrysone carboxyl ACP thioesterase AacuM then breaks the thioester bond and releases the atrochrysone carboxylic acid from AacuL. Atrochrysone carboxylic acid is decarboxylated by the decarboxylase AacuI, and oxidized by the anthrone oxygenase AacuG to yield emodin. Emodin is then reduced to emodin hydroquinone by a yet unidentified oxidoreductase. A-ring reduction by the short chain dehydrogenase AacuN, dehydration by the scytalone dehydratase-like protein AacuK and probable spontaneous re-oxidation, results in overall deoxygenation to chrysophanol. Baeyer-Villiger oxidation by the Baeyer-Villiger monooxygenase (BVMO) AacuH then yields monodictyphenone. Monodictyphenone is transformed into compounds with the tetrahydroxanthone skeleton via methylesterification by the methyltransferase AacuQ, followed by the action of the flavin-dependent monooxygenase AacuC, the isomerase AacuP, and the short chain dehydrogenase/reductase AacuF or AacuD. AacuF and AacuD should accept the same compound as a substrate but perform the ketoreduction with a different stereoselectivity, thus yielding blennolides B and A, respectively. In the final step of the biosynthesis, the cytochrome P450 monooxygenase AacuE accepts blennolide B and/or blennolide A to conduct the dimerization reaction to furnish the tetrahydroxanthone dimers, secalonic acids D, B, and F. The protein is Short-chain dehydrogenase/reductase AacuF of Aspergillus aculeatus (strain ATCC 16872 / CBS 172.66 / WB 5094).